The primary structure comprises 507 residues: GMP synthase [glutamine-hydrolyzing] (507 aa).

Residues 4 to 193 (KIIILDFGSQ…VVDVCGCKQD (190 aa)) enclose the Glutamine amidotransferase type-1 domain. The active-site Nucleophile is the Cys79. Residues His167 and Glu169 contribute to the active site. The 189-residue stretch at 194-382 (WSPASFIEST…LGMPEHLITR (189 aa)) folds into the GMPS ATP-PPase domain. Position 221-227 (221-227 (SGGVDSS)) interacts with ATP.

As to quaternary structure, homodimer.

It catalyses the reaction XMP + L-glutamine + ATP + H2O = GMP + L-glutamate + AMP + diphosphate + 2 H(+). The protein operates within purine metabolism; GMP biosynthesis; GMP from XMP (L-Gln route): step 1/1. In terms of biological role, catalyzes the synthesis of GMP from XMP. This is GMP synthase [glutamine-hydrolyzing] from Bacteroides fragilis (strain ATCC 25285 / DSM 2151 / CCUG 4856 / JCM 11019 / LMG 10263 / NCTC 9343 / Onslow / VPI 2553 / EN-2).